Consider the following 236-residue polypeptide: 2-C-methyl-D-erythritol 4-phosphate cytidylyltransferase (236 aa).

This sequence belongs to the IspD/TarI cytidylyltransferase family. IspD subfamily.

It catalyses the reaction 2-C-methyl-D-erythritol 4-phosphate + CTP + H(+) = 4-CDP-2-C-methyl-D-erythritol + diphosphate. It functions in the pathway isoprenoid biosynthesis; isopentenyl diphosphate biosynthesis via DXP pathway; isopentenyl diphosphate from 1-deoxy-D-xylulose 5-phosphate: step 2/6. Catalyzes the formation of 4-diphosphocytidyl-2-C-methyl-D-erythritol from CTP and 2-C-methyl-D-erythritol 4-phosphate (MEP). The chain is 2-C-methyl-D-erythritol 4-phosphate cytidylyltransferase from Azoarcus sp. (strain BH72).